The sequence spans 123 residues: Large ribosomal subunit protein uL14 (123 aa).

This sequence belongs to the universal ribosomal protein uL14 family. Part of the 50S ribosomal subunit. Forms a cluster with proteins L3 and L19. In the 70S ribosome, L14 and L19 interact and together make contacts with the 16S rRNA in bridges B5 and B8.

Functionally, binds to 23S rRNA. Forms part of two intersubunit bridges in the 70S ribosome. In Yersinia pestis bv. Antiqua (strain Antiqua), this protein is Large ribosomal subunit protein uL14.